Reading from the N-terminus, the 277-residue chain is Large ribosomal subunit protein uL2 (277 aa).

Residues 226–277 (MNPVDHPHGGGEGRSPIGMPSPVTPWGKPTLGYKTRKPNKKSDRLIVSRRKK) form a disordered region.

This sequence belongs to the universal ribosomal protein uL2 family. Part of the 50S ribosomal subunit. Forms a bridge to the 30S subunit in the 70S ribosome.

In terms of biological role, one of the primary rRNA binding proteins. Required for association of the 30S and 50S subunits to form the 70S ribosome, for tRNA binding and peptide bond formation. It has been suggested to have peptidyltransferase activity; this is somewhat controversial. Makes several contacts with the 16S rRNA in the 70S ribosome. The polypeptide is Large ribosomal subunit protein uL2 (Symbiobacterium thermophilum (strain DSM 24528 / JCM 14929 / IAM 14863 / T)).